The primary structure comprises 342 residues: Transmembrane protein 268 (342 aa).

The segment at 1-30 (MACEPQVDPGATGPLPPSSPGWSALPGGSP) is disordered. 2 consecutive transmembrane segments (helical) span residues 105 to 125 (AFAV…SQMF) and 132 to 152 (AGML…VLVF).

Interacts with ITGAM; this interaction inhibits ITGAM degradation via the endosome-lysosome pathway. Interacts with ITGB4; this interaction prevents ITGB4 degradation.

It is found in the cell membrane. Functionally, stabilizes cell surface expression of ITGAM and participates in the adhesion and migration of phagocytes during bacterial clearance. This Homo sapiens (Human) protein is Transmembrane protein 268.